A 56-amino-acid polypeptide reads, in one-letter code: Large ribosomal subunit protein bL32 (56 aa).

The protein belongs to the bacterial ribosomal protein bL32 family.

This chain is Large ribosomal subunit protein bL32, found in Synechococcus sp. (strain CC9311).